A 198-amino-acid polypeptide reads, in one-letter code: MNLLILFFGYLFGSFPSGYLAGRIAKGIDIRSLGSGSTGATNVLRHIGKRAAIIVFLLDVFKGVLSILLAKYLLLNDSWQVAIGLSTLIGHIWPVWLNWKGGKAVATGLGIFLGLSWQVGLATLGVFIIMITLFRIVSLASVSASLALPLIMFLSFSGSNISLPFLIVSLLAMLLVIWRHRENIVRLIRGKEPRIGQP.

Transmembrane regions (helical) follow at residues 1–21, 53–73, 79–99, 111–131, 136–156, and 158–178; these read MNLL…GYLA, IIVF…AKYL, WQVA…WLNW, IFLG…IIMI, IVSL…FLSF, and GSNI…LVIW.

This sequence belongs to the PlsY family. As to quaternary structure, probably interacts with PlsX.

The protein localises to the cell inner membrane. The catalysed reaction is an acyl phosphate + sn-glycerol 3-phosphate = a 1-acyl-sn-glycero-3-phosphate + phosphate. The protein operates within lipid metabolism; phospholipid metabolism. Functionally, catalyzes the transfer of an acyl group from acyl-phosphate (acyl-PO(4)) to glycerol-3-phosphate (G3P) to form lysophosphatidic acid (LPA). This enzyme utilizes acyl-phosphate as fatty acyl donor, but not acyl-CoA or acyl-ACP. In Prochlorococcus marinus (strain NATL1A), this protein is Glycerol-3-phosphate acyltransferase.